The sequence spans 465 residues: Asparagine--tRNA ligase (465 aa).

It belongs to the class-II aminoacyl-tRNA synthetase family. Homodimer.

It is found in the cytoplasm. The enzyme catalyses tRNA(Asn) + L-asparagine + ATP = L-asparaginyl-tRNA(Asn) + AMP + diphosphate + H(+). The protein is Asparagine--tRNA ligase of Hahella chejuensis (strain KCTC 2396).